The following is a 513-amino-acid chain: Sodium/potassium/calcium exchanger 5 (513 aa).

Residues 1–35 (MRTDVFLQRRKRRDVLLSIIALLLLIFAIVHLVFC) form the signal peptide. The Extracellular portion of the chain corresponds to 36-78 (AGLSFQGSSSARVRRDLENASECVQPQSSEFPEGFFTVQERKD). The chain crosses the membrane as a helical span at residues 79–99 (GGILIYFMIIFYMLLSVSIVC). Residues 100 to 123 (DEYFLPSLEVISERLGLSQDVAGA) lie on the Cytoplasmic side of the membrane. The helical transmembrane segment at 124-144 (TFMAAGSSAPELVTAFLGVFV) threads the bilayer. Over 145 to 148 (TKGD) the chain is Extracellular. Residues 149-169 (IGVSTIMGSAVYNLLCICAAC) form a helical membrane-spanning segment. Residues 170-181 (GLLSSAVGRLSC) are Cytoplasmic-facing. The helical transmembrane segment at 182-202 (WPLFRDCVAYAISVAAVIAII) threads the bilayer. The Extracellular segment spans residues 203-207 (SDNRV). A helical transmembrane segment spans residues 208-228 (YWYDGACLLLVYGVYVAVLCF). Topologically, residues 229-315 (DLRISEYVMQ…KSVFSMPDHD (87 aa)) are cytoplasmic. Residues 316–336 (LKRILWVLSLPVSTLLFVSVP) form a helical membrane-spanning segment. The Extracellular portion of the chain corresponds to 337–350 (DCRRPFWKNFYMLT). The chain crosses the membrane as a helical span at residues 351–371 (FLMSAVWISAFTYVLVWMVTI). The Cytoplasmic segment spans residues 372 to 381 (VGETLGIPDT). Residues 382–402 (VMGMTLLAAGTSIPDTVASVM) form a helical membrane-spanning segment. The Extracellular segment spans residues 403-420 (VAREGKSDMAMSNIVGSN). Residues 421 to 441 (VFDMLCLGLPWFIQTVFVDVG) form a helical membrane-spanning segment. Over 442-450 (SPVEVNSSG) the chain is Cytoplasmic. Residues 451–471 (LVFMSCTLLLSIIFLFLAVHI) traverse the membrane as a helical segment. Topologically, residues 472–482 (NGWKLDWKLGL) are extracellular. Residues 483-503 (VCLACYILFATLSILYELGII) traverse the membrane as a helical segment. Topologically, residues 504 to 513 (GNNPIRSCSD) are cytoplasmic.

It belongs to the Ca(2+):cation antiporter (CaCA) (TC 2.A.19) family. SLC24A subfamily. As to expression, highly expressed in melanin-producing cells. Colocalizes with melanin biosynthesis marker dct.

It is found in the golgi apparatus. The protein localises to the trans-Golgi network membrane. Its subcellular location is the melanosome. It carries out the reaction Ca(2+)(out) + K(+)(out) + 4 Na(+)(in) = Ca(2+)(in) + K(+)(in) + 4 Na(+)(out). Calcium, potassium:sodium antiporter that transports 1 Ca(2+) and 1 K(+) to the melanosome in exchange for 4 cytoplasmic Na(+). Involved in pigmentation, possibly by participating in ion transport in melanosomes. Predominant sodium-calcium exchanger in melanocytes. This Danio rerio (Zebrafish) protein is Sodium/potassium/calcium exchanger 5 (slc24a5).